Here is a 430-residue protein sequence, read N- to C-terminus: Cortical fragment-lytic enzyme (430 aa).

LysM domains lie at Gln3–Val47 and Asn52–Val96. In terms of domain architecture, GH18 spans Val104–Gly430. The active-site Proton donor is the Glu219.

It belongs to the glycosyl hydrolase 18 family. Chitinase class II subfamily.

The protein localises to the spore cortex. Inhibited by diethylpyrocarbonate. In terms of biological role, N-acetylglucosaminidase involved in cortex peptidoglycan degradation during germination. Cleaves only partially degraded spore peptidoglycans. Recognizes muramic acid delta-lactam residues specific to spore peptidoglycans. In Bacillus cereus, this protein is Cortical fragment-lytic enzyme.